A 447-amino-acid chain; its full sequence is MDQTYSLESFLNHVQKRDPNQTEFAQAVREVMTTLWPFLEQNPKYRQMSLLERLVEPERVIQFRVVWVDDRNQIQVNRAWRVQFSSAIGPYKGGMRFHPSVNLSILKFLGFEQTFKNALTTLPMGGGKGGSDFDPKGKSEGEVMRFCQALMTELYRHLGADTDVPAGDIGVGGREVGFMAGMMKKLSNNTACVFTGKGLSFGGSLIRPEATGYGLVYFTEAMLKRHGMGFEGMRVSVSGSGNVAQYAIEKAMEFGARVITASDSSGTVVDESGFTKEKLARLIEIKASRDGRVADYAKEFGLVYLEGQQPWSLPVDIALPCATQNELDVDAAHQLIANGVKAVAEGANMPTTIEATELFQQAGVLFAPGKAANAGGVATSGLEMAQNAARLGWKAEKVDARLHHIMLDIHHACVEHGGEGEQTNYVQGANIAGFVKVADAMLAQGVI.

3 residues coordinate substrate: Lys92, Gln113, and Lys116. Lys128 (proton donor) is an active-site residue. Gly167 contacts substrate. Residues Thr211 and Asn242 each coordinate NADP(+). Ser380 is a binding site for substrate.

The protein belongs to the Glu/Leu/Phe/Val dehydrogenases family. In terms of assembly, homohexamer.

The catalysed reaction is L-glutamate + NADP(+) + H2O = 2-oxoglutarate + NH4(+) + NADPH + H(+). With respect to regulation, competitively inhibited by homoserine and by glutamine. In terms of biological role, catalyzes the reversible oxidative deamination of glutamate to alpha-ketoglutarate and ammonia. The protein is NADP-specific glutamate dehydrogenase of Escherichia coli (strain K12).